Consider the following 108-residue polypeptide: Urease subunit beta (108 aa).

The protein belongs to the urease beta subunit family. In terms of assembly, heterotrimer of UreA (gamma), UreB (beta) and UreC (alpha) subunits. Three heterotrimers associate to form the active enzyme.

It is found in the cytoplasm. The enzyme catalyses urea + 2 H2O + H(+) = hydrogencarbonate + 2 NH4(+). The protein operates within nitrogen metabolism; urea degradation; CO(2) and NH(3) from urea (urease route): step 1/1. The protein is Urease subunit beta of Trichormus variabilis (strain ATCC 29413 / PCC 7937) (Anabaena variabilis).